The primary structure comprises 138 residues: MRHGKVHRKLNRTAEHRKAMFANMCAALIKHEQIVTTLPKAKELRPIVEKLVTLGKKGGLDKRRQAISEMRDLDQVRKLFDVLAKRYADRQGGYTRIIKAGFRYGDNAPMAVIEFVDRDEDAKGKDSGPSQDGAAEAA.

A disordered region spans residues 118 to 138 (RDEDAKGKDSGPSQDGAAEAA).

The protein belongs to the bacterial ribosomal protein bL17 family. In terms of assembly, part of the 50S ribosomal subunit. Contacts protein L32.

This Rhodopseudomonas palustris (strain HaA2) protein is Large ribosomal subunit protein bL17.